A 210-amino-acid chain; its full sequence is Na(+)-translocating NADH-quinone reductase subunit D (210 aa).

The next 6 helical transmembrane spans lie at 10-30 (VLFGPILDNNPIALQILGVCS), 42-62 (LVMSLALTAVTAFSNLFISMI), 72-92 (IIVQMTIIASLVIVVDQILKA), 103-123 (VFVGLIITNCIVMGRAEAFAM), 143-163 (FVLIVIGTIKELFGFGTILGF), and 178-198 (NGLLILPFSSFFLIGGLIWFI).

It belongs to the NqrDE/RnfAE family. In terms of assembly, composed of six subunits; NqrA, NqrB, NqrC, NqrD, NqrE and NqrF.

The protein resides in the cell inner membrane. The catalysed reaction is a ubiquinone + n Na(+)(in) + NADH + H(+) = a ubiquinol + n Na(+)(out) + NAD(+). In terms of biological role, NQR complex catalyzes the reduction of ubiquinone-1 to ubiquinol by two successive reactions, coupled with the transport of Na(+) ions from the cytoplasm to the periplasm. NqrA to NqrE are probably involved in the second step, the conversion of ubisemiquinone to ubiquinol. In Pseudoalteromonas atlantica (strain T6c / ATCC BAA-1087), this protein is Na(+)-translocating NADH-quinone reductase subunit D.